Here is a 319-residue protein sequence, read N- to C-terminus: Ankyrin repeat domain-containing protein 1 (319 aa).

The disordered stretch occupies residues Lys-46–Leu-65. Positions Val-53–Ile-89 form a coiled coil. The span at Gln-55–Leu-65 shows a compositional bias: basic and acidic residues. ANK repeat units follow at residues Tyr-152 to Phe-181, Leu-185 to Ala-214, Leu-218 to Ala-247, Glu-251 to Val-280, and Ala-284 to Arg-315.

As to quaternary structure, interacts with TTN/titin and YBX1. In terms of tissue distribution, expressed in heart, cardiac muscle.

The protein localises to the nucleus. Functionally, may play an important role in endothelial cell activation. May act as a nuclear transcription factor that negatively regulates the expression of cardiac genes. This chain is Ankyrin repeat domain-containing protein 1 (Ankrd1), found in Mus musculus (Mouse).